Reading from the N-terminus, the 33-residue chain is Brevinin-2 (33 aa).

A disulfide bond links Cys27 and Cys33.

Belongs to the frog skin active peptide (FSAP) family. Brevinin subfamily. As to expression, expressed by the skin glands.

Its subcellular location is the secreted. Its function is as follows. Shows antibacterial activity against representative Gram-negative and Gram-positive bacterial species, and a very high hemolytic activity. This Pelophylax porosus brevipodus (Nagoya Daruma pond frog) protein is Brevinin-2.